A 365-amino-acid chain; its full sequence is 3-dehydroquinate synthase (365 aa).

Residues 106-110 (GVIGD), 130-131 (TT), K142, K151, and 169-172 (FFAT) each bind NAD(+). Zn(2+) is bound by residues E184, H247, and H264.

This sequence belongs to the sugar phosphate cyclases superfamily. Dehydroquinate synthase family. The cofactor is NAD(+). Co(2+) serves as cofactor. It depends on Zn(2+) as a cofactor.

Its subcellular location is the cytoplasm. It catalyses the reaction 7-phospho-2-dehydro-3-deoxy-D-arabino-heptonate = 3-dehydroquinate + phosphate. Its pathway is metabolic intermediate biosynthesis; chorismate biosynthesis; chorismate from D-erythrose 4-phosphate and phosphoenolpyruvate: step 2/7. Its function is as follows. Catalyzes the conversion of 3-deoxy-D-arabino-heptulosonate 7-phosphate (DAHP) to dehydroquinate (DHQ). The sequence is that of 3-dehydroquinate synthase from Listeria monocytogenes serotype 4b (strain F2365).